Reading from the N-terminus, the 189-residue chain is HGPRTase-like protein (189 aa).

It belongs to the purine/pyrimidine phosphoribosyltransferase family. Archaeal HPRT subfamily.

Functionally, may catalyze a purine salvage reaction, the substrate is unknown. The polypeptide is HGPRTase-like protein (Halomicrobium mukohataei (strain ATCC 700874 / DSM 12286 / JCM 9738 / NCIMB 13541) (Haloarcula mukohataei)).